The primary structure comprises 454 residues: Notoamide biosynthesis cluster protein M' (454 aa).

N51 and N74 each carry an N-linked (GlcNAc...) asparagine glycan. Over residues 205 to 219 (KARSKEKKPKRKKSK) the composition is skewed to basic residues. The segment at 205 to 224 (KARSKEKKPKRKKSKAEKEH) is disordered. The next 2 membrane-spanning stretches (helical) occupy residues 334–354 (MTTV…SGLF) and 375–395 (FWMY…VWGV).

The protein resides in the membrane. In terms of biological role, part of the gene cluster that mediates the biosynthesis of notoamide, a fungal indole alkaloid that belongs to a family of natural products containing a characteristic bicyclo[2.2.2]diazaoctane core. The first step of notoamide biosynthesis involves coupling of L-proline and L-tryptophan by the bimodular NRPS notE', to produce cyclo-L-tryptophan-L-proline called brevianamide F. The reverse prenyltransferase notF' then acts as a deoxybrevianamide E synthase and converts brevianamide F to deoxybrevianamide E via reverse prenylation at C-2 of the indole ring leading to the bicyclo[2.2.2]diazaoctane core. Deoxybrevianamide E is further hydroxylated at C-6 of the indole ring, likely catalyzed by the cytochrome P450 monooxygenase notG', to yield 6-hydroxy-deoxybrevianamide E. 6-hydroxy-deoxybrevianamide E is a specific substrate of the prenyltransferase notC' for normal prenylation at C-7 to produce 6-hydroxy-7-prenyl-deoxybrevianamide, also called notoamide S. As the proposed pivotal branching point in notoamide biosynthesis, notoamide S can be diverted to notoamide E through an oxidative pyran ring closure putatively catalyzed by either notH' cytochrome P450 monooxygenase or the notD' FAD-linked oxidoreductase. This step would be followed by an indole 2,3-epoxidation-initiated pinacol-like rearrangement catalyzed by the notB' FAD-dependent monooxygenase leading to the formation of notoamide C and notoamide D. On the other hand notoamide S is converted to notoamide T by notH' (or notD'), a bifunctional oxidase that also functions as the intramolecular Diels-Alderase responsible for generation of (-)-notoamide T. To generate antipodal (+)-notoaminide T, notH (or notD) in Aspergillus strain MF297-2 is expected to catalyze a Diels-Alder reaction leading to the opposite stereochemistry. The remaining oxidoreductase notD' (or notH') likely catalyzes the oxidative pyran ring formation to yield (-)-stephacidin A. The FAD-dependent monooxygenase notI' is highly similar to notB' and is predicted to catalyze a similar conversion from (-)-stephacidin A to (+)-notoamide B via the 2,3-epoxidation of (-)-stephacidin A followed by a pinacol-type rearrangement. Finally, it remains unclear which enzyme could be responsible for the final hydroxylation steps leading to notoamide A and sclerotiamide. The function of notM' in the notoamide biosynthesis has not been determined yet. The protein is Notoamide biosynthesis cluster protein M' of Aspergillus versicolor.